The primary structure comprises 178 residues: Large ribosomal subunit protein uL5 (178 aa).

Belongs to the universal ribosomal protein uL5 family. In terms of assembly, part of the 50S ribosomal subunit; part of the 5S rRNA/L5/L18/L25 subcomplex. Contacts the 5S rRNA and the P site tRNA. Forms a bridge to the 30S subunit in the 70S ribosome.

This is one of the proteins that bind and probably mediate the attachment of the 5S RNA into the large ribosomal subunit, where it forms part of the central protuberance. In the 70S ribosome it contacts protein S13 of the 30S subunit (bridge B1b), connecting the 2 subunits; this bridge is implicated in subunit movement. Contacts the P site tRNA; the 5S rRNA and some of its associated proteins might help stabilize positioning of ribosome-bound tRNAs. The chain is Large ribosomal subunit protein uL5 from Wigglesworthia glossinidia brevipalpis.